A 578-amino-acid polypeptide reads, in one-letter code: V-type ATP synthase alpha chain (578 aa).

Position 228–235 (228–235 (GPFGSGKT)) interacts with ATP.

Belongs to the ATPase alpha/beta chains family.

It catalyses the reaction ATP + H2O + 4 H(+)(in) = ADP + phosphate + 5 H(+)(out). Functionally, produces ATP from ADP in the presence of a proton gradient across the membrane. The V-type alpha chain is a catalytic subunit. The protein is V-type ATP synthase alpha chain of Thermus thermophilus (strain ATCC BAA-163 / DSM 7039 / HB27).